Here is a 648-residue protein sequence, read N- to C-terminus: Transcription termination factor FttA (648 aa).

The interval 1–179 (MIKRETQVDQ…QVGRNIYRKP (179 aa)) is not required for dimerization, required for cleavage at some sites. Positions 9–76 (DQILKDIRGI…ISIRPDPDVL (68 aa)) are KHa. The segment at 77 to 144 (LPPEEAEKLI…WAPKVVRTPP (68 aa)) is KHb. Residues 185–395 (WIRITGLGGF…LVMESTYGGA (211 aa)) are metallo-beta-lactamase N-terminus. Zn(2+) is bound by residues histidine 253, histidine 255, aspartate 257, histidine 258, histidine 341, and aspartate 364. The tract at residues 396-589 (NDIQMPREEA…MEVHTIDGFS (194 aa)) is beta-Casp. Positions 590–648 (GHADRRELMNYVAKVRPRPERVITVHGEPQKCLDLATSIHRKFGLSTRAPNNLDTIRLR) are metallo-beta-lactamase C-terminus. Histidine 615 is a Zn(2+) binding site.

The protein belongs to the metallo-beta-lactamase superfamily. RNA-metabolizing metallo-beta-lactamase-like family. FttA subfamily. Homodimer. Interacts with RNA polymerase (RNAP), interacts with the Spt4-Spt5 complex. Requires Zn(2+) as cofactor.

EndoRNase activity is inhibited by 1,10-phenanthroline. Terminates transcription on the whole genome. Termination is linked to FttA-mediated RNA cleavage and does not require NTP hydrolysis. Cleaves endonucleolytically at the RNA exit channel of RNA polymerase (RNAP); the 5'-3' exonuclease activity of this protein degrades the nascent RNA released from RNAP. Functionally, a single-stranded endoribonuclease (endoRNase) with a preference for cleavage at CA dinucleotides. Has 5'-3' exoribonuclease (exoRNase) activity on 5'-monophosphorylated RNA; this activity does not occur on 5'-tri-phosphorylated or 5'-OH substrates. Also has weak activity 5'-3' exodeoxyribonuclease activity on ssDNA. This Pyrococcus abyssi (strain GE5 / Orsay) protein is Transcription termination factor FttA.